Reading from the N-terminus, the 680-residue chain is Probable ATP-dependent RNA helicase pitchoune (680 aa).

The tract at residues 1–168 is disordered; the sequence is MSIREKLLMK…GKPAKDDEPF (168 aa). Positions 29–42 are enriched in polar residues; the sequence is KNAQKQEPPKQNGN. The span at 59-69 shows a compositional bias: acidic residues; sequence DEDDDLEEDFQ. Residues 74–83 show a composition bias toward basic residues; it reads PKKKQQKQPP. Positions 95 to 141 are enriched in acidic residues; the sequence is SESDDDEQEDEADEDSDLDEVAEVDEEDVDSGSEDDDQQEDEDEEEP. The short motif at 187-215 is the Q motif element; that stretch reads FASLKGAVSEATLRAIKEMGFTEMTEIQS. Residues 218-393 form the Helicase ATP-binding domain; that stretch reads LTPLLKGRDL…KLALKSEPIY (176 aa). Position 231–238 (231–238) interacts with ATP; the sequence is AQTGSGKT. A DEVD box motif is present at residues 341–344; the sequence is DEVD. The Helicase C-terminal domain occupies 407-577; it reads GLEQGYIVCP…DIQLQLEKLI (171 aa). The tract at residues 659–680 is disordered; that stretch reads GSASKQRHFKQVNRDQAKKFMR. Residues 670–680 show a composition bias toward basic and acidic residues; that stretch reads VNRDQAKKFMR.

This sequence belongs to the DEAD box helicase family. DDX18/HAS1 subfamily.

The protein localises to the nucleus. Its subcellular location is the nucleolus. It catalyses the reaction ATP + H2O = ADP + phosphate + H(+). In terms of biological role, probable RNA-dependent helicase. Functions in cell growth and proliferation. May have a role in ribosome biogenesis and, consequently, in protein biosynthesis. The protein is Probable ATP-dependent RNA helicase pitchoune (pit) of Drosophila melanogaster (Fruit fly).